Here is a 131-residue protein sequence, read N- to C-terminus: Leptin receptor gene-related protein (131 aa).

4 helical membrane-spanning segments follow: residues 7–27, 32–52, 69–89, and 100–120; these read LVAL…GCAL, VYWP…HFIA, LAYF…VILA, and GLVL…FLVF.

Belongs to the OB-RGRP/VPS55 family. In terms of assembly, interacts with LEPR. Interacts with RAB13.

It localises to the golgi apparatus membrane. The protein localises to the endosome membrane. Its function is as follows. Negatively regulates leptin receptor (LEPR) cell surface expression, and thus decreases response to leptin/LEP. Negatively regulates growth hormone (GH) receptor cell surface expression in liver. May play a role in liver resistance to GH during periods of reduced nutrient availability. This Sus scrofa (Pig) protein is Leptin receptor gene-related protein (LEPROT).